A 239-amino-acid chain; its full sequence is Leucyl/phenylalanyl-tRNA--protein transferase (239 aa).

The protein belongs to the L/F-transferase family.

The protein resides in the cytoplasm. The catalysed reaction is N-terminal L-lysyl-[protein] + L-leucyl-tRNA(Leu) = N-terminal L-leucyl-L-lysyl-[protein] + tRNA(Leu) + H(+). It catalyses the reaction N-terminal L-arginyl-[protein] + L-leucyl-tRNA(Leu) = N-terminal L-leucyl-L-arginyl-[protein] + tRNA(Leu) + H(+). It carries out the reaction L-phenylalanyl-tRNA(Phe) + an N-terminal L-alpha-aminoacyl-[protein] = an N-terminal L-phenylalanyl-L-alpha-aminoacyl-[protein] + tRNA(Phe). Functions in the N-end rule pathway of protein degradation where it conjugates Leu, Phe and, less efficiently, Met from aminoacyl-tRNAs to the N-termini of proteins containing an N-terminal arginine or lysine. The chain is Leucyl/phenylalanyl-tRNA--protein transferase from Aliivibrio fischeri (strain MJ11) (Vibrio fischeri).